Reading from the N-terminus, the 279-residue chain is Ribosomal RNA small subunit methyltransferase A (279 aa).

S-adenosyl-L-methionine-binding residues include H11, L13, G42, E63, D88, and N104.

Belongs to the class I-like SAM-binding methyltransferase superfamily. rRNA adenine N(6)-methyltransferase family. RsmA subfamily.

It localises to the cytoplasm. The enzyme catalyses adenosine(1518)/adenosine(1519) in 16S rRNA + 4 S-adenosyl-L-methionine = N(6)-dimethyladenosine(1518)/N(6)-dimethyladenosine(1519) in 16S rRNA + 4 S-adenosyl-L-homocysteine + 4 H(+). Its function is as follows. Specifically dimethylates two adjacent adenosines (A1518 and A1519) in the loop of a conserved hairpin near the 3'-end of 16S rRNA in the 30S particle. May play a critical role in biogenesis of 30S subunits. In Synechococcus sp. (strain JA-3-3Ab) (Cyanobacteria bacterium Yellowstone A-Prime), this protein is Ribosomal RNA small subunit methyltransferase A.